The sequence spans 309 residues: Transcription termination/antitermination protein NusG (309 aa).

Disordered stretches follow at residues 1–24 and 58–91; these read MSDP…ADDE and EGDH…VEAG. A compositionally biased stretch (acidic residues) spans 65 to 91; sequence TDEDIEAGAVETDEDVETDTDEDVEAG.

The protein belongs to the NusG family.

In terms of biological role, participates in transcription elongation, termination and antitermination. This is Transcription termination/antitermination protein NusG from Streptomyces galbus.